The primary structure comprises 256 residues: Isoprenyl transferase (256 aa).

Asp33 is a catalytic residue. Residue Asp33 participates in Mg(2+) binding. Residues 34-37 (GNGR), Trp38, Arg46, His50, and 78-80 (STE) each bind substrate. The active-site Proton acceptor is Asn81. Substrate-binding positions include Trp82, Arg84, Arg201, and 207 to 209 (RIS). Position 220 (Glu220) interacts with Mg(2+).

Belongs to the UPP synthase family. Homodimer. Mg(2+) is required as a cofactor.

Catalyzes the condensation of isopentenyl diphosphate (IPP) with allylic pyrophosphates generating different type of terpenoids. The protein is Isoprenyl transferase of Staphylococcus aureus (strain COL).